The primary structure comprises 213 residues: Ribonuclease T (213 aa).

An Exonuclease domain is found at 28-202; that stretch reads VVVDVETGGF…YDTEQTARLF (175 aa). Mg(2+) contacts are provided by Asp31, Glu33, His189, and Asp194. The active-site Proton donor/acceptor is His189.

This sequence belongs to the RNase T family. In terms of assembly, homodimer. It depends on Mg(2+) as a cofactor.

In terms of biological role, trims short 3' overhangs of a variety of RNA species, leaving a one or two nucleotide 3' overhang. Responsible for the end-turnover of tRNA: specifically removes the terminal AMP residue from uncharged tRNA (tRNA-C-C-A). Also appears to be involved in tRNA biosynthesis. This Xanthomonas euvesicatoria pv. vesicatoria (strain 85-10) (Xanthomonas campestris pv. vesicatoria) protein is Ribonuclease T.